A 114-amino-acid polypeptide reads, in one-letter code: uncharacterized protein (114 aa).

The region spanning 6 to 114 (IFKNIIQRKI…LGGKKLKSFS (109 aa)) is the HIT domain.

This is an uncharacterized protein from Buchnera aphidicola subsp. Acyrthosiphon pisum (strain APS) (Acyrthosiphon pisum symbiotic bacterium).